The chain runs to 113 residues: Hydrogenase maturation factor HypA (113 aa).

His2 is a Ni(2+) binding site. 4 residues coordinate Zn(2+): Cys73, Cys76, Cys89, and Cys92.

Belongs to the HypA/HybF family.

Involved in the maturation of [NiFe] hydrogenases. Required for nickel insertion into the metal center of the hydrogenase. This Actinobacillus succinogenes (strain ATCC 55618 / DSM 22257 / CCUG 43843 / 130Z) protein is Hydrogenase maturation factor HypA.